The following is a 166-amino-acid chain: Phospholipase A2 inhibitor clone 08 (166 aa).

A signal peptide spans 1–19 (MRLILLSSLLLLGIFLANG). The region spanning 46–161 (LKGAFLTVHR…CDDNLLVVCE (116 aa)) is the C-type lectin domain. Cystine bridges form between C83/C160 and C138/C152. N122 is a glycosylation site (N-linked (GlcNAc...) asparagine).

This sequence belongs to the alpha-type phospholipase A2 inhibitor family. Homotrimer; non-covalently linked. As to expression, expressed by the liver.

It localises to the secreted. Its function is as follows. This phospholipase A2 inhibitor binds directly phospholipase A2 in the presence or absence of calcium. This is Phospholipase A2 inhibitor clone 08 from Bothrops moojeni (Lance-headed viper).